The following is a 175-amino-acid chain: SsrA-binding protein (175 aa).

Belongs to the SmpB family.

It is found in the cytoplasm. Required for rescue of stalled ribosomes mediated by trans-translation. Binds to transfer-messenger RNA (tmRNA), required for stable association of tmRNA with ribosomes. tmRNA and SmpB together mimic tRNA shape, replacing the anticodon stem-loop with SmpB. tmRNA is encoded by the ssrA gene; the 2 termini fold to resemble tRNA(Ala) and it encodes a 'tag peptide', a short internal open reading frame. During trans-translation Ala-aminoacylated tmRNA acts like a tRNA, entering the A-site of stalled ribosomes, displacing the stalled mRNA. The ribosome then switches to translate the ORF on the tmRNA; the nascent peptide is terminated with the 'tag peptide' encoded by the tmRNA and targeted for degradation. The ribosome is freed to recommence translation, which seems to be the essential function of trans-translation. This chain is SsrA-binding protein, found in Prochlorococcus marinus subsp. pastoris (strain CCMP1986 / NIES-2087 / MED4).